We begin with the raw amino-acid sequence, 78 residues long: CDC42 small effector protein 1 (78 aa).

2 S-palmitoyl cysteine lipidation sites follow: C10 and C11. One can recognise a CRIB domain in the interval 30–43 (IGEPMNFVHLTHIG).

The protein belongs to the CDC42SE/SPEC family.

It is found in the cytoplasm. It localises to the cytoskeleton. Its subcellular location is the cell membrane. Its function is as follows. Probably involved in the organization of the actin cytoskeleton by acting downstream of CDC42, inducing actin filament assembly. In Gallus gallus (Chicken), this protein is CDC42 small effector protein 1 (CDC42SE1).